We begin with the raw amino-acid sequence, 63 residues long: Conotoxin Lt11.1 (63 aa).

The signal sequence occupies residues M1–A23. 4 cysteine pairs are disulfide-bonded: C24–C34, C28–C39, C33–C42, and C38–C47. Positions A53–R63 are excised as a propeptide.

The protein belongs to the conotoxin I2 superfamily. In terms of tissue distribution, expressed by the venom duct.

Its subcellular location is the secreted. This Conus litteratus (Lettered cone) protein is Conotoxin Lt11.1.